We begin with the raw amino-acid sequence, 8922 residues long: Protein clarinet (8922 aa).

The interval 11 to 35 (SKGPPLEEVREESEEDAQVPEQVVS) is disordered. Residues 19-28 (VREESEEDAQ) are compositionally biased toward acidic residues. Positions 385 to 405 (KDETKLILKSVEDKLETTEIE) form a coiled coil. Disordered regions lie at residues 527 to 579 (QEAA…EPEL), 622 to 673 (IVIS…EPEL), 687 to 860 (LAEK…KEPE), 880 to 955 (SFEQ…EPEL), 971 to 1049 (EQSS…EPEL), 1062 to 1139 (SSAE…MESR), 1151 to 1331 (IARI…EPEL), 1347 to 1420 (EQSS…VMES), 1444 to 1520 (SFEQ…PELT), 1538 to 1619 (SFEQ…EEID), 1632 to 1710 (SFEQ…LTQE), 1726 to 1801 (SFEQ…VPEL), 1820 to 1898 (SFEQ…LTQE), 1939 to 1992 (VISE…LTQE), 2032 to 2084 (IVIS…SELT), 2126 to 2175 (IVIS…SKEP), 2194 to 2213 (QSSFEQASTITDRPPLPVRL), 2220 to 2246 (IVISEQHEGDRSSATPGADYERSYDQD), 2329 to 2403 (SFEQ…KKPE), 2423 to 2497 (SFEQ…KPEL), 2516 to 2594 (SFEQ…LTQE), 2610 to 2684 (SFEQ…KEPE), 2704 to 2845 (SFEQ…ERPF), 2892 to 2963 (SFEQ…MESK), 2983 to 3155 (EQSS…EPEL), 3171 to 3249 (EQSS…EPEL), 3268 to 3337 (SFEQ…PVML), 3619 to 3639 (SITPSEGDDGGSSETGHPTTD), 3995 to 4079 (AEPV…QEEI), 4117 to 4169 (IVIS…PELT), 4181 to 4271 (SLAE…STTI), 4557 to 4624 (QASA…TQEE), 4636 to 4656 (EQSSFEQASTIPDRPPLPVRL), 4666 to 4685 (SEQHEGDISSATSGADYERS), 4730 to 4801 (EQSS…GVTQ), 4855 to 4899 (PANP…PLQD), 5004 to 5036 (PEDFSEATSGADTESISETTANKKDSNDSNGLT), 5360 to 5379 (LAMFTNPSPSASPSLLRKES), 5390 to 5413 (RRSSGADSRASNDSSASRLPDTAL), 5484 to 5511 (KKQISSRTESTNSRVSSEGIDEEVENEV), 5540 to 5572 (PPIAISHPTPPHSAKTDTGSRHSSGSSAHSQFG), 6194 to 6303 (AEPV…ESES), 6354 to 6437 (DVES…GSRM), 6487 to 6510 (SSKSSTSLGTSAPTKSIPSPQIGI), 6577 to 6609 (ARFPPPSSQIPTRSPSVMSSSIMSELPPGLDDL), 6668 to 6691 (NAETDSSSSVITSRQPSRSPSVAR), 6728 to 6768 (AEFE…VPPG), 6998 to 7018 (TERKQREESPTRESGYATSTS), 7045 to 7098 (ARSR…DDFD), 7137 to 7175 (FDGDESELPHQDFVFNEPTTKKTSDFDFPKETDEVFEKP), 7202 to 7263 (EAPS…YPDR), 7313 to 7350 (KTTTSQTPSTSTKPTVTAPKRSDPIPIAPSQRSKEIEE), 7598 to 7623 (DSVRDDNERNENETTSPRGLKRSPGM), 7760 to 7797 (TRRHQHQQQHQAPVYITSSASRPPSAAGSNIFQESRPT), and 7842 to 7881 (HIRQPVSVRSPRAQTGTTQTTAASGSASNSIRPSIGSSSV). Residues 531–552 (SDNHEKERSSATSKADYERSFD) are compositionally biased toward basic and acidic residues. Residues 760 to 776 (MESKEPELTQEEIDHIA) are compositionally biased toward basic and acidic residues. The span at 1062–1076 (SSAEQSSFEQASTVP) shows a compositional bias: low complexity. The span at 1230 to 1244 (MESKEPELTQEEIDH) shows a compositional bias: basic and acidic residues. The segment covering 1251 to 1261 (IAEQSSFEQAS) has biased composition (polar residues). 2 stretches are compositionally biased toward basic and acidic residues: residues 1606-1619 (MESKEPELTQEEID) and 1700-1710 (MESKEPELTQE). 2 stretches are compositionally biased toward basic and acidic residues: residues 1888 to 1898 (MESKEPELTQE) and 1982 to 1992 (MESKESELTQE). The segment covering 2194–2204 (QSSFEQASTIT) has biased composition (polar residues). The segment covering 2584–2594 (MESKEPELTQE) has biased composition (basic and acidic residues). Basic and acidic residues predominate over residues 2772–2788 (MESKEPELTQEEIDHIA). The span at 2793–2803 (LAEQSSFEQAS) shows a compositional bias: polar residues. The span at 3076–3085 (APSSSFEQAS) shows a compositional bias: polar residues. Residues 4035–4044 (GTSFPDNAET) show a composition bias toward polar residues. Positions 4065 to 4079 (PVMKSKEPELTQEEI) are enriched in basic and acidic residues. 3 stretches are compositionally biased toward polar residues: residues 4182 to 4195 (LAEQSSFEQTSTIP), 4223 to 4234 (SATSGADYQQSF), and 4255 to 4271 (MESTQPELTQDHSSTTI). The segment covering 4571–4580 (IVEKREDDKS) has biased composition (basic and acidic residues). Residues 4581-4594 (NITSGADYQQSFDQ) show a composition bias toward polar residues. A compositionally biased stretch (basic and acidic residues) spans 4613 to 4624 (MESKEPELTQEE). A compositionally biased stretch (polar residues) spans 4636–4645 (EQSSFEQAST). Positions 4730 to 4739 (EQSSFEQAST) are enriched in polar residues. Low complexity predominate over residues 4871 to 4890 (EGSSSATSGADIPSSFDISS). A compositionally biased stretch (polar residues) spans 5009 to 5023 (EATSGADTESISETT). A compositionally biased stretch (low complexity) spans 5390–5407 (RRSSGADSRASNDSSASR). Positions 5486–5499 (QISSRTESTNSRVS) are enriched in polar residues. Pro residues predominate over residues 5540–5550 (PPIAISHPTPP). Over residues 5560-5572 (RHSSGSSAHSQFG) the composition is skewed to low complexity. 2 stretches are compositionally biased toward polar residues: residues 6225 to 6245 (ASSGASGSFDNNNAQVLTSGF) and 6270 to 6284 (KTVSPTPSADSMASR). Composition is skewed to basic and acidic residues over residues 6285 to 6303 (KSSEYDIRSISEIRQESES) and 6376 to 6422 (GEGE…EESL). Polar residues predominate over residues 6494-6505 (LGTSAPTKSIPS). Low complexity predominate over residues 6590-6600 (SPSVMSSSIMS). The segment covering 6670–6687 (ETDSSSSVITSRQPSRSP) has biased composition (polar residues). Residues 6735–6747 (SQVPSRQPSRSPS) are compositionally biased toward low complexity. Basic and acidic residues-rich tracts occupy residues 6998–7008 (TERKQREESPT) and 7045–7069 (ARSRRDSRDEVLHRREEDPEVHTPE). Residues 7071 to 7086 (SSTAVVTDVPSVSPVT) are compositionally biased toward low complexity. Basic and acidic residues predominate over residues 7155-7175 (TTKKTSDFDFPKETDEVFEKP). Positions 7248 to 7260 (SDEESCSEDDEEY) are enriched in acidic residues. Low complexity predominate over residues 7313 to 7331 (KTTTSQTPSTSTKPTVTAP). Residues 7599–7609 (SVRDDNERNEN) show a composition bias toward basic and acidic residues. Composition is skewed to low complexity over residues 7777 to 7788 (SSASRPPSAAGS) and 7854 to 7880 (AQTGTTQTTAASGSASNSIRPSIGSSS). Residues 7895–7915 (KKELKDVLIQRKQRLEATEIE) adopt a coiled-coil conformation. The tract at residues 8510–8562 (SRRRAQETALTSSNKISTGSRSYARRPIRPSSYRNPEATNSMPDRHVARRTAE) is disordered. Polar residues-rich tracts occupy residues 8517 to 8530 (TALTSSNKISTGSR) and 8541 to 8551 (SYRNPEATNSM). The segment covering 8552–8562 (PDRHVARRTAE) has biased composition (basic and acidic residues). In terms of domain architecture, PDZ spans 8570-8661 (RILLTRSYKH…EIEMVIRTYK (92 aa)). Positions 8714–8835 (CHGHIQVSLG…SAINTGPRWY (122 aa)) constitute a C2 domain.

Expressed in the nervous system.

It is found in the synapse. Its subcellular location is the cell projection. It localises to the axon. Its function is as follows. Required for synapse development in the active zone of presynaptic terminals of specific neurons including serotonergic NSM neurons. The active zone is a protein-dense neuronal region within the presynaptic bouton, from which synaptic vesicles send neurotransmitter signals across the synapse. Plays a role in the recruitment and clustering of synaptic vesicles in the active zone of presynaptic terminals in serotonergic NSM neurons, and coordinates the release of synaptic vesicles at presynaptic terminals to regulate neurotransmission at neuromuscular junctions. Regulates synapse number in inhibitory motor neurons and plays a role in spontaneous postsynaptic synaptic vesicle release in muscle cells. The protein is Protein clarinet of Caenorhabditis elegans.